Reading from the N-terminus, the 151-residue chain is uncharacterized protein (151 aa).

The N-acetyltransferase domain maps to 3-151 (IKIDDLTGRQ…PNSVFMTKKL (149 aa)).

This sequence belongs to the acetyltransferase family.

This is an uncharacterized protein from Bacillus subtilis (strain 168).